A 185-amino-acid chain; its full sequence is MEPPQCVEELEDDVFQPEDGEPGTQPGSLLSADLFAQSQLDCPLSRLQLFPLTHCCGPGLRPVSQEDKATQTLSPASPSQGVMLPCGVTEEPQRLFYGNAGYRLPLPASFPAGSALGEQPPEGQFLQHRAEVQIARKLQCIADQFHRLHMQQHQQNRDRAWRQVFLFLQNLALNRRENREGVGPW.

Positions 1–28 (MEPPQCVEELEDDVFQPEDGEPGTQPGS) are disordered. The segment covering 8-21 (EELEDDVFQPEDGE) has biased composition (acidic residues). Positions 67–75 (DKATQTLSP) are interaction with DLC2. Residues 134–148 (IARKLQCIADQFHRL) carry the BH3 motif.

This sequence belongs to the Bcl-2 family. As to quaternary structure, interacts with MCL1, BCL2, BCL2L1/BCL-Xl, BCL2A1 and BCL2L2/BCL-w. Interacts with the myosin V actin motor complex through its binding to DLC2.

May play a role in apoptosis. This is Bcl-2-modifying factor (Bmf) from Rattus norvegicus (Rat).